Here is a 113-residue protein sequence, read N- to C-terminus: Stigma/stylar cysteine-rich adhesin (113 aa).

A signal peptide spans 1–22 (MARSSAVCFLLLLAFLIGTASA). Intrachain disulfides connect cysteine 25–cysteine 72, cysteine 35–cysteine 49, cysteine 50–cysteine 95, and cysteine 70–cysteine 109.

It belongs to the plant LTP family. Highly expressed in style and stigma, abundant in young leaves and petals, and low expression in young anthers at pollen mother cell stage with an active tapetum. Not expressed in mature leaves or in pollen grains or tubes. Found in the stylar transmitting tract epidermis and in the stylar extracellular matrix.

Functionally, acts as an adhesive agent between the pollen tube wall and the stylar transmitting tract epidermis. Binds a stylar pectin in a pH-dependent manner. Enhances activity of chemocyanin, a diffusible chemotropic factor. This Lilium longiflorum (Trumpet lily) protein is Stigma/stylar cysteine-rich adhesin (SCA).